The following is a 165-amino-acid chain: Transcription factor zip-10 (165 aa).

Residues 53–71 show a composition bias toward low complexity; the sequence is ASLGTSTTSSSRCSSTESS. The segment at 53–99 is disordered; sequence ASLGTSTTSSSRCSSTESSAAPGKIRRGRPQQEIADGQDAHSQKKRH. Residues 104 to 150 are a coiled coil; sequence ARQYRAQMRQKVENVKSLHDEKEQLELEVKALRQAVSGLQQENAQKD.

The protein resides in the nucleus. Transcription factor that regulates the expression of genes in response to changes in temperature. In particular, binds to the promoter region of genes such as asp-17 in response to severe cold to warm temperature transitions to promote gene expression. Promotes stress-induced death, particularly in older animals, following cold shock followed by warming and this may have evolved as a form of kin survival under thermal stress conditions, favoring the survival of younger animals. The chain is Transcription factor zip-10 from Caenorhabditis elegans.